Consider the following 77-residue polypeptide: Acyl carrier protein (77 aa).

Residues 2–77 (SDIADRVKKI…DAVKFISDAS (76 aa)) enclose the Carrier domain. Serine 37 is subject to O-(pantetheine 4'-phosphoryl)serine.

Belongs to the acyl carrier protein (ACP) family. In terms of processing, 4'-phosphopantetheine is transferred from CoA to a specific serine of apo-ACP by AcpS. This modification is essential for activity because fatty acids are bound in thioester linkage to the sulfhydryl of the prosthetic group.

It is found in the cytoplasm. The protein operates within lipid metabolism; fatty acid biosynthesis. Carrier of the growing fatty acid chain in fatty acid biosynthesis. This is Acyl carrier protein from Roseobacter denitrificans (strain ATCC 33942 / OCh 114) (Erythrobacter sp. (strain OCh 114)).